We begin with the raw amino-acid sequence, 1402 residues long: DNA-directed RNA polymerase subunit beta' (1402 aa).

Zn(2+) contacts are provided by C71, C73, C86, and C89. Residues D462, D464, and D466 each coordinate Mg(2+). Residues C811, C885, C892, and C895 each contribute to the Zn(2+) site.

Belongs to the RNA polymerase beta' chain family. In terms of assembly, the RNAP catalytic core consists of 2 alpha, 1 beta, 1 beta' and 1 omega subunit. When a sigma factor is associated with the core the holoenzyme is formed, which can initiate transcription. It depends on Mg(2+) as a cofactor. The cofactor is Zn(2+).

The catalysed reaction is RNA(n) + a ribonucleoside 5'-triphosphate = RNA(n+1) + diphosphate. Its function is as follows. DNA-dependent RNA polymerase catalyzes the transcription of DNA into RNA using the four ribonucleoside triphosphates as substrates. This chain is DNA-directed RNA polymerase subunit beta', found in Bartonella henselae (strain ATCC 49882 / DSM 28221 / CCUG 30454 / Houston 1) (Rochalimaea henselae).